We begin with the raw amino-acid sequence, 417 residues long: NADH-quinone oxidoreductase subunit D (417 aa).

The protein belongs to the complex I 49 kDa subunit family. NDH-1 is composed of 14 different subunits. Subunits NuoB, C, D, E, F, and G constitute the peripheral sector of the complex.

The protein localises to the cell inner membrane. It catalyses the reaction a quinone + NADH + 5 H(+)(in) = a quinol + NAD(+) + 4 H(+)(out). In terms of biological role, NDH-1 shuttles electrons from NADH, via FMN and iron-sulfur (Fe-S) centers, to quinones in the respiratory chain. The immediate electron acceptor for the enzyme in this species is believed to be ubiquinone. Couples the redox reaction to proton translocation (for every two electrons transferred, four hydrogen ions are translocated across the cytoplasmic membrane), and thus conserves the redox energy in a proton gradient. This chain is NADH-quinone oxidoreductase subunit D, found in Leptothrix cholodnii (strain ATCC 51168 / LMG 8142 / SP-6) (Leptothrix discophora (strain SP-6)).